The following is a 495-amino-acid chain: Averantin hydroxylase (495 aa).

The helical transmembrane segment at 12 to 32 (ILLLIVLTVLTPPSLALYRLW) threads the bilayer. Residues N258 and N289 are each glycosylated (N-linked (GlcNAc...) asparagine). A heme-binding site is contributed by C436.

The protein belongs to the cytochrome P450 family. Heme serves as cofactor.

It is found in the membrane. The catalysed reaction is (1'S)-averantin + reduced [NADPH--hemoprotein reductase] + O2 = (1'S,5'R)-5'-hydroxyaverantin + oxidized [NADPH--hemoprotein reductase] + H2O. It catalyses the reaction (1'S)-averantin + reduced [NADPH--hemoprotein reductase] + O2 = (1'S,5'S)-5'-hydroxyaverantin + oxidized [NADPH--hemoprotein reductase] + H2O + H(+). It participates in mycotoxin biosynthesis; aflatoxin biosynthesis. Functionally, averantin hydroxylase; part of the gene cluster that mediates the biosynthesis of aflatoxins, a group of polyketide-derived furanocoumarins, and part of the most toxic and carcinogenic compounds among the known mycotoxins. The four major aflatoxins produced by A.parasiticus are aflatoxin B1 (AFB1), aflatoxin B2 (AFB2), aflatoxin G1 (AFG1) and aflatoxin G2 (AFG2). Within the aflatoxin pathway, the cytochrome P450 monooxygenase aflG catalyzes the hydroxylation of AVN to 5'hydroxyaverantin (HAVN). The biosynthesis of aflatoxins begins with the norsolorinic acid synthase aflC that combines a hexanoyl starter unit produced by the fatty acid synthase aflA/aflB and 7 malonyl-CoA extender units to synthesize the precursor NOR. The second step is the conversion of NOR to averantin and requires the norsolorinic acid ketoreductase aflD, which catalyzes the dehydration of norsolorinic acid to form (1'S)-averantin. The norsolorinic acid reductases aflE and aflF may also play a role in the conversion of NOR to AVN. The cytochrome P450 monooxygenase aflG then catalyzes the hydroxylation of AVN to 5'hydroxyaverantin (HAVN). The next step is performed by the 5'-hydroxyaverantin dehydrogenase aflH that transforms HAVN to 5'-oxoaverantin (OAVN) which is further converted to averufin (AVF) by aflK that plays a dual role in the pathway, as a 5'-oxoaverantin cyclase that mediates conversion of 5'-oxoaverantin, as well as a versicolorin B synthase in a later step in the pathway. The averufin oxidase aflI catalyzes the conversion of AVF to versiconal hemiacetal acetate (VHA). VHA is then the substrate for the versiconal hemiacetal acetate esterase aflJ to yield versiconal (VAL). Versicolorin B synthase aflK then converts VAL to versicolorin B (VERB) by closing the bisfuran ring of aflatoxin which is required for DNA-binding, thus giving to aflatoxin its activity as a mutagen. Then, the activity of the versicolorin B desaturase aflL leads to versicolorin A (VERA). A branch point starts from VERB since it can also be converted to dihydrodemethylsterigmatocystin (DMDHST), probably also by aflL, VERA being a precursor for aflatoxins B1 and G1, and DMDHST for aflatoxins B2 and G2. Next, the versicolorin reductase aflM and the cytochrome P450 monooxygenase aflN are involved in conversion of VERA to demethylsterigmatocystin (DMST). AflX and aflY seem also involved in this step, through probable aflX-mediated epoxide ring-opening step following versicolorin A oxidation and aflY-mediated Baeyer-Villiger oxidation required for the formation of the xanthone ring. The methyltransferase aflO then leads to the modification of DMST to sterigmatocystin (ST), and of DMDHST to dihydrosterigmatocystin (DHST). Both ST and DHST are then substrates of the O-methyltransferase aflP to yield O-methylsterigmatocystin (OMST) and dihydro-O-methylsterigmatocystin (DHOMST), respectively. Finally OMST is converted to aflatoxins B1 and G1, and DHOMST to aflatoxins B2 and G2, via the action of several enzymes including O-methylsterigmatocystin oxidoreductase aflQ, the cytochrome P450 monooxygenase aflU, but also the NADH-dependent flavin oxidoreductase nadA which is specifically required for the synthesis of AFG1. The protein is Averantin hydroxylase of Aspergillus parasiticus (strain ATCC 56775 / NRRL 5862 / SRRC 143 / SU-1).